A 252-amino-acid chain; its full sequence is Triosephosphate isomerase (252 aa).

9–11 (NWK) contacts substrate. His100 acts as the Electrophile in catalysis. The Proton acceptor role is filled by Glu171. Substrate is bound by residues Gly177, Ser216, and 237–238 (GG).

It belongs to the triosephosphate isomerase family. In terms of assembly, homodimer.

Its subcellular location is the cytoplasm. It catalyses the reaction D-glyceraldehyde 3-phosphate = dihydroxyacetone phosphate. It participates in carbohydrate biosynthesis; gluconeogenesis. The protein operates within carbohydrate degradation; glycolysis; D-glyceraldehyde 3-phosphate from glycerone phosphate: step 1/1. Involved in the gluconeogenesis. Catalyzes stereospecifically the conversion of dihydroxyacetone phosphate (DHAP) to D-glyceraldehyde-3-phosphate (G3P). This Polynucleobacter asymbioticus (strain DSM 18221 / CIP 109841 / QLW-P1DMWA-1) (Polynucleobacter necessarius subsp. asymbioticus) protein is Triosephosphate isomerase.